The sequence spans 394 residues: Aromatic-amino-acid aminotransferase (394 aa).

Positions 34, 65, 127, and 180 each coordinate substrate. Lys-243 bears the N6-(pyridoxal phosphate)lysine mark. Arg-371 provides a ligand contact to substrate.

It belongs to the class-I pyridoxal-phosphate-dependent aminotransferase family. As to quaternary structure, homodimer. Requires pyridoxal 5'-phosphate as cofactor.

The protein localises to the cytoplasm. It carries out the reaction an aromatic L-alpha-amino acid + 2-oxoglutarate = an aromatic oxo-acid + L-glutamate. Shows activities toward both dicarboxylic and aromatic substrates. The sequence is that of Aromatic-amino-acid aminotransferase (tyrB) from Paracoccus denitrificans.